The sequence spans 228 residues: MNPILKGVYSPARLGVVALTLFGILGVTGCSTAVDETQRAWMNKIFRPYVPDVVQGNFISSEQYAKLQLGMTREQVRQIMGTPLLASYFHANRWDYVFEFKRSGQTVGKERHVTVFFDGDKVVKFEGDALPTEVELVAEIDNYSKSKRSFWEVITDTNKLPVTPPLQQPEVLVTSKTDNLPAGAAVPAANTSGSFWDFFGSSKKDPDPQSPQLGPGTLNDVPKPADSK.

The signal sequence occupies residues 1-29 (MNPILKGVYSPARLGVVALTLFGILGVTG). Residue C30 is the site of N-palmitoyl cysteine attachment. C30 carries the S-diacylglycerol cysteine lipid modification. The segment at 197–228 (DFFGSSKKDPDPQSPQLGPGTLNDVPKPADSK) is disordered.

This sequence belongs to the BamE family. As to quaternary structure, part of the Bam complex.

Its subcellular location is the cell outer membrane. Functionally, part of the outer membrane protein assembly complex, which is involved in assembly and insertion of beta-barrel proteins into the outer membrane. This is Outer membrane protein assembly factor BamE from Polynucleobacter necessarius subsp. necessarius (strain STIR1).